Consider the following 662-residue polypeptide: Polyadenylate-binding protein 4 (662 aa).

The segment at 1 to 23 is disordered; sequence MAQVQAPSSHSPPPPAVVNDGAA. RRM domains are found at residues 46–124, 134–211, 225–302, and 328–405; these read CSLY…YSSR, GNLF…PFLR, TNVY…KAQK, and LNLY…LAQR. 2 stretches are compositionally biased toward low complexity: residues 480–489 and 506–518; these read PMMQPGQQGP and QQPM…QMMP. Disordered regions lie at residues 480–518 and 634–662; these read PMMQ…QMMP and NQPS…NDHL. The PABC domain occupies 558–635; the sequence is SAGQLATSLA…ALDVLRNVNQ (78 aa). The span at 634–649 shows a compositional bias: polar residues; the sequence is NQPSSQGSEGNKSGSP.

Belongs to the polyadenylate-binding protein type-1 family. Interacts with ERD15/CID1. Interacts with Turnip mosaic virus (TuMV) VPg-Pro.

The protein localises to the cytoplasm. The protein resides in the nucleus. Functionally, binds the poly(A) tail of mRNA. Appears to be an important mediator of the multiple roles of the poly(A) tail in mRNA biogenesis, stability and translation. During infection with potyvirus TuMV, acts as a potential integral component of the viral replicase complex that could play an important role in the regulation of potyviral RNA-dependent RNA polymerase (RdRp). The protein is Polyadenylate-binding protein 4 (PAB4) of Arabidopsis thaliana (Mouse-ear cress).